The primary structure comprises 749 residues: Patatin-like phospholipase domain-containing protein An01g04180 (749 aa).

The interval 1–21 is disordered; the sequence is MNGAEKSAAGDTYDPSTIPDY. A helical transmembrane segment spans residues 87–107; the sequence is WPFLFTVFGWITALAFAYTLT. In terms of domain architecture, PNPLA spans 277–468; that stretch reads LCLSGGATFA…RTDIPIKALN (192 aa). The short motif at 308 to 312 is the GXSXG element; that stretch reads GTSGG. Ser310 (nucleophile) is an active-site residue. The Proton acceptor role is filled by Asp455. The interval 619–726 is disordered; that stretch reads AGGRPISPAP…STGSSIFEEV (108 aa). The span at 649–664 shows a compositional bias: basic and acidic residues; the sequence is PLNERLDHNLPERRGD. The span at 685–707 shows a compositional bias: low complexity; the sequence is SLSENSSNESAARPSSSSSSSRL.

The protein belongs to the PLPL family.

The protein resides in the membrane. Probable lipid hydrolase. The protein is Patatin-like phospholipase domain-containing protein An01g04180 of Aspergillus niger (strain ATCC MYA-4892 / CBS 513.88 / FGSC A1513).